We begin with the raw amino-acid sequence, 155 residues long: Cathelicidin-1 (155 aa).

The first 29 residues, 1–29, serve as a signal peptide directing secretion; the sequence is METQRASLSLGRCSLWLLLLGLALPSASA. Glutamine 30 is modified (pyrrolidone carboxylic acid). Residues 30–143 constitute a propeptide that is removed on maturation; sequence QVLSYREAVL…KQPWAPPQAA (114 aa). 3 disulfide bridges follow: cysteine 85–cysteine 96, cysteine 107–cysteine 124, and cysteine 146–cysteine 154.

It belongs to the cathelicidin family.

The protein localises to the secreted. Its function is as follows. Potent microbicidal activity; active against S.aureus and E.coli. This chain is Cathelicidin-1 (CATHL1A), found in Ovis aries (Sheep).